A 579-amino-acid chain; its full sequence is Pentatricopeptide repeat-containing protein At2g15690, mitochondrial (579 aa).

Residues 1–49 (MSSLMAIRCARTQNIVTIGSLLQLRSSFPRLSSQFHFSGTLNSIPIKHL) constitute a mitochondrion transit peptide. Composition is skewed to polar residues over residues 56-71 (NDYH…SQHQ) and 78-103 (SFDS…TQHG). The interval 56 to 208 (NDYHQNPQSG…QMNEVAPPPS (153 aa)) is disordered. Composition is skewed to low complexity over residues 117–136 (GGQR…QMSQ) and 148–199 (RPQY…SPNQ). 5 PPR repeats span residues 235 to 269 (DREC…KFRG), 270 to 300 (DPKL…MVDK), 301 to 335 (DMDS…GLKP), 336 to 371 (NEET…GISP), and 372 to 402 (KTEH…LPFE). Residues 485–579 (GVVYVPDTRF…DGKCSCGDYW (95 aa)) are type DYW motif.

The protein belongs to the PPR family. PCMP-H subfamily.

Its subcellular location is the mitochondrion. This chain is Pentatricopeptide repeat-containing protein At2g15690, mitochondrial (PCMP-H66), found in Arabidopsis thaliana (Mouse-ear cress).